Reading from the N-terminus, the 300-residue chain is 4-hydroxy-tetrahydrodipicolinate synthase (300 aa).

Thr45 provides a ligand contact to pyruvate. Residue Tyr140 is the Proton donor/acceptor of the active site. The active-site Schiff-base intermediate with substrate is Lys169. Ile210 is a pyruvate binding site.

The protein belongs to the DapA family. As to quaternary structure, homotetramer; dimer of dimers.

Its subcellular location is the cytoplasm. It catalyses the reaction L-aspartate 4-semialdehyde + pyruvate = (2S,4S)-4-hydroxy-2,3,4,5-tetrahydrodipicolinate + H2O + H(+). The protein operates within amino-acid biosynthesis; L-lysine biosynthesis via DAP pathway; (S)-tetrahydrodipicolinate from L-aspartate: step 3/4. Its function is as follows. Catalyzes the condensation of (S)-aspartate-beta-semialdehyde [(S)-ASA] and pyruvate to 4-hydroxy-tetrahydrodipicolinate (HTPA). The sequence is that of 4-hydroxy-tetrahydrodipicolinate synthase from Helicobacter pylori (strain G27).